A 94-amino-acid chain; its full sequence is Large ribosomal subunit protein bL25 (94 aa).

The protein belongs to the bacterial ribosomal protein bL25 family. As to quaternary structure, part of the 50S ribosomal subunit; part of the 5S rRNA/L5/L18/L25 subcomplex. Contacts the 5S rRNA. Binds to the 5S rRNA independently of L5 and L18.

Functionally, this is one of the proteins that binds to the 5S RNA in the ribosome where it forms part of the central protuberance. In Proteus mirabilis (strain HI4320), this protein is Large ribosomal subunit protein bL25.